The primary structure comprises 210 residues: Ribosomal RNA small subunit methyltransferase G (210 aa).

Residues G74, F79, 127–128 (IE), and R143 each bind S-adenosyl-L-methionine.

It belongs to the methyltransferase superfamily. RNA methyltransferase RsmG family.

Its subcellular location is the cytoplasm. The catalysed reaction is guanosine(527) in 16S rRNA + S-adenosyl-L-methionine = N(7)-methylguanosine(527) in 16S rRNA + S-adenosyl-L-homocysteine. Specifically methylates the N7 position of guanine in position 527 of 16S rRNA. The sequence is that of Ribosomal RNA small subunit methyltransferase G from Chelativorans sp. (strain BNC1).